The sequence spans 153 residues: Ribonuclease H (153 aa).

One can recognise an RNase H type-1 domain in the interval 4 to 145 (SVDSVELFTD…ADQLANRGVD (142 aa)). Positions 13, 51, 73, and 137 each coordinate Mg(2+).

This sequence belongs to the RNase H family. In terms of assembly, monomer. The cofactor is Mg(2+).

It is found in the cytoplasm. The catalysed reaction is Endonucleolytic cleavage to 5'-phosphomonoester.. Functionally, endonuclease that specifically degrades the RNA of RNA-DNA hybrids. The sequence is that of Ribonuclease H from Pseudomonas fluorescens (strain Pf0-1).